Reading from the N-terminus, the 286-residue chain is Bifunctional protein FolD (286 aa).

Residues 165–167 and Ser190 each bind NADP(+); that span reads GRS.

This sequence belongs to the tetrahydrofolate dehydrogenase/cyclohydrolase family. In terms of assembly, homodimer.

It carries out the reaction (6R)-5,10-methylene-5,6,7,8-tetrahydrofolate + NADP(+) = (6R)-5,10-methenyltetrahydrofolate + NADPH. The catalysed reaction is (6R)-5,10-methenyltetrahydrofolate + H2O = (6R)-10-formyltetrahydrofolate + H(+). The protein operates within one-carbon metabolism; tetrahydrofolate interconversion. Functionally, catalyzes the oxidation of 5,10-methylenetetrahydrofolate to 5,10-methenyltetrahydrofolate and then the hydrolysis of 5,10-methenyltetrahydrofolate to 10-formyltetrahydrofolate. The polypeptide is Bifunctional protein FolD (Burkholderia orbicola (strain MC0-3)).